We begin with the raw amino-acid sequence, 156 residues long: Small ribosomal subunit protein uS7c (156 aa).

The protein belongs to the universal ribosomal protein uS7 family. Part of the 30S ribosomal subunit.

It localises to the plastid. Its subcellular location is the chloroplast. In terms of biological role, one of the primary rRNA binding proteins, it binds directly to 16S rRNA where it nucleates assembly of the head domain of the 30S subunit. The chain is Small ribosomal subunit protein uS7c (rps7) from Chlorokybus atmophyticus (Soil alga).